The sequence spans 730 residues: Matrix metalloproteinase-9 (730 aa).

The signal sequence occupies residues 1 to 19 (MSPWQPLLLALLAFGCSSA). A propeptide spans 20 to 107 (APYQRQPTFV…PRCGVPDVGR (88 aa)) (activation peptide). The N-linked (GlcNAc...) asparagine glycan is linked to asparagine 39. The Cysteine switch signature appears at 98-105 (PRCGVPDV). Residue cysteine 100 participates in Zn(2+) binding. Residues asparagine 120 and asparagine 127 are each glycosylated (N-linked (GlcNAc...) asparagine). 2 residues coordinate Ca(2+): aspartate 131 and aspartate 165. Residues histidine 175 and aspartate 177 each coordinate Zn(2+). Ca(2+) is bound by residues aspartate 182, glycine 183, aspartate 185, and leucine 187. Residue histidine 190 coordinates Zn(2+). Ca(2+) is bound by residues glycine 197, glutamine 199, and aspartate 201. A Zn(2+)-binding site is contributed by histidine 203. 3 residues coordinate Ca(2+): aspartate 205, aspartate 206, and glutamate 208. 3 consecutive Fibronectin type-II domains span residues 225-273 (SNGA…FCPS), 283-331 (GEGK…FCPT), and 342-390 (SAGE…FCPD). 6 disulfides stabilise this stretch: cysteine 230/cysteine 256, cysteine 244/cysteine 271, cysteine 288/cysteine 314, cysteine 302/cysteine 329, cysteine 347/cysteine 373, and cysteine 361/cysteine 388. Position 401 (histidine 401) interacts with Zn(2+). Glutamate 402 is a catalytic residue. Histidine 405 and histidine 411 together coordinate Zn(2+). The tract at residues 442-529 (LYGRGSKPDP…SEASTESLSP (88 aa)) is disordered. A compositionally biased stretch (pro residues) spans 463 to 477 (PTAPPTMCPTIPPTA). Over residues 478–489 (YPTVGPTVGPTG) the composition is skewed to low complexity. Residues 490 to 514 (APSPGPTSSPSPGPTGAPSPGPTAP) show a composition bias toward pro residues. Cysteine 534 and cysteine 729 are disulfide-bonded. 4 Hemopexin repeats span residues 536–581 (VDVF…WPAL), 582–626 (PATL…GLGP), 628–675 (VTHV…FSGV), and 676–729 (PWNS…LLQC).

Belongs to the peptidase M10A family. In terms of assembly, exists as monomer or homodimer; disulfide-linked. Also exists as heterodimer with LCN2. Macrophages and transformed cell lines produce only the monomeric form. Interacts with ECM1. Zn(2+) is required as a cofactor. Ca(2+) serves as cofactor. In terms of processing, N- and O-glycosylated.

Its subcellular location is the secreted. It is found in the extracellular space. The protein localises to the extracellular matrix. The catalysed reaction is Cleavage of gelatin types I and V and collagen types IV and V.. Inhibited by histatin-3 1/24 (histatin-5). Inhibited by ECM1. Matrix metalloproteinase that plays an essential role in local proteolysis of the extracellular matrix and in leukocyte migration. Could play a role in bone osteoclastic resorption. Cleaves KiSS1 at a Gly-|-Leu bond. Cleaves NINJ1 to generate the Secreted ninjurin-1 form. Cleaves type IV and type V collagen into large C-terminal three quarter fragments and shorter N-terminal one quarter fragments. Degrades fibronectin but not laminin or Pz-peptide. This is Matrix metalloproteinase-9 (Mmp9) from Mus musculus (Mouse).